Consider the following 85-residue polypeptide: MNYLVFFSLALLLMTGVGSVRDGYIADDKNCPYFCGRNAYCDDECKKNGAESGYCQWAGVYGNACWCYKLPDKVPIRVPGKCNGG.

An N-terminal signal peptide occupies residues Met1–Ser19. The LCN-type CS-alpha/beta domain maps to Arg21–Asn83. 4 disulfide bridges follow: Cys31–Cys82, Cys35–Cys55, Cys41–Cys65, and Cys45–Cys67.

It belongs to the long (4 C-C) scorpion toxin superfamily. Sodium channel inhibitor family. Alpha subfamily. As to expression, expressed by the venom gland.

It is found in the secreted. Its function is as follows. Alpha toxins bind voltage-independently at site-3 of sodium channels (Nav) and inhibit the inactivation of the activated channels, thereby blocking neuronal transmission. This Olivierus martensii (Manchurian scorpion) protein is Toxin BmKa1.